The chain runs to 199 residues: Protein-methionine-sulfoxide reductase heme-binding subunit MsrQ (199 aa).

A run of 4 helical transmembrane segments spans residues 10–30 (WLKV…FWAI), 82–102 (LWCF…ELGI), 116–136 (PYLT…LTST), and 153–173 (VVYL…KILS).

Belongs to the MsrQ family. Heterodimer of a catalytic subunit (MsrP) and a heme-binding subunit (MsrQ). FMN serves as cofactor. The cofactor is heme b.

Its subcellular location is the cell inner membrane. Its function is as follows. Part of the MsrPQ system that repairs oxidized periplasmic proteins containing methionine sulfoxide residues (Met-O), using respiratory chain electrons. Thus protects these proteins from oxidative-stress damage caused by reactive species of oxygen and chlorine generated by the host defense mechanisms. MsrPQ is essential for the maintenance of envelope integrity under bleach stress, rescuing a wide series of structurally unrelated periplasmic proteins from methionine oxidation, including the primary periplasmic chaperone SurA and the lipoprotein Pal. MsrQ provides electrons for reduction to the reductase catalytic subunit MsrP, using the quinone pool of the respiratory chain. The protein is Protein-methionine-sulfoxide reductase heme-binding subunit MsrQ of Salmonella newport (strain SL254).